Here is a 24-residue protein sequence, read N- to C-terminus: Potassium channel toxin alpha-KTx 6 OcyKTx5 (24 aa).

An intrachain disulfide couples C3 to C24.

This sequence belongs to the short scorpion toxin superfamily. Potassium channel inhibitor family. Alpha-KTx 06 subfamily. As to expression, expressed by the venom gland.

The protein resides in the secreted. Functionally, blocks voltage-gated potassium channels. The polypeptide is Potassium channel toxin alpha-KTx 6 OcyKTx5 (Opisthacanthus cayaporum (South American scorpion)).